The sequence spans 493 residues: Protein nucleotidyltransferase YdiU (493 aa).

ATP contacts are provided by glycine 81, glycine 83, arginine 84, lysine 103, aspartate 115, glycine 116, arginine 166, and arginine 173. The active-site Proton acceptor is the aspartate 244. Mg(2+) is bound by residues asparagine 245 and aspartate 254. Aspartate 254 is a binding site for ATP.

Belongs to the SELO family. Mg(2+) serves as cofactor. It depends on Mn(2+) as a cofactor.

The catalysed reaction is L-seryl-[protein] + ATP = 3-O-(5'-adenylyl)-L-seryl-[protein] + diphosphate. The enzyme catalyses L-threonyl-[protein] + ATP = 3-O-(5'-adenylyl)-L-threonyl-[protein] + diphosphate. It carries out the reaction L-tyrosyl-[protein] + ATP = O-(5'-adenylyl)-L-tyrosyl-[protein] + diphosphate. It catalyses the reaction L-histidyl-[protein] + UTP = N(tele)-(5'-uridylyl)-L-histidyl-[protein] + diphosphate. The catalysed reaction is L-seryl-[protein] + UTP = O-(5'-uridylyl)-L-seryl-[protein] + diphosphate. The enzyme catalyses L-tyrosyl-[protein] + UTP = O-(5'-uridylyl)-L-tyrosyl-[protein] + diphosphate. Functionally, nucleotidyltransferase involved in the post-translational modification of proteins. It can catalyze the addition of adenosine monophosphate (AMP) or uridine monophosphate (UMP) to a protein, resulting in modifications known as AMPylation and UMPylation. The chain is Protein nucleotidyltransferase YdiU from Shewanella frigidimarina (strain NCIMB 400).